Here is a 227-residue protein sequence, read N- to C-terminus: Cytidylate kinase (227 aa).

Position 12 to 20 (12 to 20) interacts with ATP; it reads GPSGAGKGT.

The protein belongs to the cytidylate kinase family. Type 1 subfamily.

Its subcellular location is the cytoplasm. It catalyses the reaction CMP + ATP = CDP + ADP. The enzyme catalyses dCMP + ATP = dCDP + ADP. In Sodalis glossinidius (strain morsitans), this protein is Cytidylate kinase.